A 93-amino-acid chain; its full sequence is Probable Fe(2+)-trafficking protein (93 aa).

Belongs to the Fe(2+)-trafficking protein family.

Functionally, could be a mediator in iron transactions between iron acquisition and iron-requiring processes, such as synthesis and/or repair of Fe-S clusters in biosynthetic enzymes. The chain is Probable Fe(2+)-trafficking protein from Acidithiobacillus ferrooxidans (strain ATCC 23270 / DSM 14882 / CIP 104768 / NCIMB 8455) (Ferrobacillus ferrooxidans (strain ATCC 23270)).